Here is a 399-residue protein sequence, read N- to C-terminus: Centrosomal protein 43 (399 aa).

The 33-residue stretch at 70–102 folds into the LisH domain; that stretch reads DGRLVASLVAEFLQFFNLDFTLAVFQPETSTFQ. Thr-143 carries the phosphothreonine modification. Residues 143-311 form a disordered region; sequence TSGEGALDLS…LKESESKRGN (169 aa). A phosphoserine mark is found at Ser-152, Ser-156, Ser-160, and Ser-202. Residues 197-209 are compositionally biased toward low complexity; the sequence is NDASHSDTSISSS. A compositionally biased stretch (acidic residues) spans 245–256; sequence PEEDDLEGDSFF. A compositionally biased stretch (low complexity) spans 286 to 302; that stretch reads APPLKSGLSSLAGAPSL. Phosphoserine occurs at positions 301 and 326. Residues 328–357 form a disordered region; the sequence is GLGTGEEDDYVDDFNSTSHRSEKSELSIGE. Residue Tyr-337 is modified to Phosphotyrosine.

Belongs to the CEP43 family. Homodimer. Part of a ternary complex that contains CEP350, CEP43 and MAPRE1. Interacts directly with CEP350 and MAPRE1. Interacts with CEP19. Interacts (via N-terminus) with CEP350 (via C-terminus).

The protein localises to the cytoplasm. Its subcellular location is the cytoskeleton. It is found in the microtubule organizing center. It localises to the centrosome. The protein resides in the centriole. The protein localises to the cilium basal body. Functionally, required for anchoring microtubules to the centrosomes. Required for ciliation. The chain is Centrosomal protein 43 (CEP43) from Bos taurus (Bovine).